Reading from the N-terminus, the 345-residue chain is NADPH-dependent curcumin reductase (345 aa).

A compositionally biased stretch (basic residues) spans 1-10 (MGQQKQRNRR). The segment at 1 to 24 (MGQQKQRNRRWVLASRPHGAPVPE) is disordered. Lysine 186, asparagine 225, and asparagine 333 together coordinate NADP(+).

As to quaternary structure, homodimer.

It catalyses the reaction tetrahydrocurcumin + 2 NADP(+) = curcumin + 2 NADPH + 2 H(+). The enzyme catalyses tetrahydrocurcumin + NADP(+) = dihydrocurcumin + NADPH + H(+). The catalysed reaction is dihydrocurcumin + NADP(+) = curcumin + NADPH + H(+). Inhibited by thiol-specific reagents (p-chloromercuribenzoate and 5,5'-dithio-bis-2-nitrobenzoate). In terms of biological role, catalyzes the metal-independent reduction of curcumin to dihydrocurcumin (DHC) as an intermediate product, followed by further reduction to tetrahydrocurcumin (THC) as an end product. It also acts on 3-octene-2-one, 3-hepten-2-one, resveratrol, and trans-2-octenal. The polypeptide is NADPH-dependent curcumin reductase (Escherichia coli (strain K12)).